We begin with the raw amino-acid sequence, 195 residues long: ATP-dependent Clp protease proteolytic subunit (195 aa).

The active-site Nucleophile is serine 101. Residue histidine 126 is part of the active site.

It belongs to the peptidase S14 family.

Its subcellular location is the plastid. It localises to the chloroplast stroma. The catalysed reaction is Hydrolysis of proteins to small peptides in the presence of ATP and magnesium. alpha-casein is the usual test substrate. In the absence of ATP, only oligopeptides shorter than five residues are hydrolyzed (such as succinyl-Leu-Tyr-|-NHMec, and Leu-Tyr-Leu-|-Tyr-Trp, in which cleavage of the -Tyr-|-Leu- and -Tyr-|-Trp bonds also occurs).. Its function is as follows. Cleaves peptides in various proteins in a process that requires ATP hydrolysis. Has a chymotrypsin-like activity. Plays a major role in the degradation of misfolded proteins. The sequence is that of ATP-dependent Clp protease proteolytic subunit from Bigelowiella natans (Pedinomonas minutissima).